The sequence spans 237 residues: Thrombin-like enzyme agkihpin-2 (237 aa).

Residue Met-1 is a propeptide. Residues 2–228 (ILGDDECNIN…HLDWIENIIA (227 aa)) form the Peptidase S1 domain. A disulfide bridge links Cys-27 with Cys-43. His-42 functions as the Charge relay system in the catalytic mechanism. A glycan (N-linked (GlcNAc...) asparagine) is linked at Asn-80. The Charge relay system role is filled by Asp-87. Intrachain disulfides connect Cys-119/Cys-189, Cys-151/Cys-168, and Cys-179/Cys-204. Ser-183 functions as the Charge relay system in the catalytic mechanism.

Belongs to the peptidase S1 family. Snake venom subfamily. As to expression, expressed by the venom gland (at protein level). Expressed by the venom gland.

It is found in the secreted. With respect to regulation, the hydrolysis of TAMe (tosyl-arginine methyl ester) substrate is activated by Ca(2+), Fe(3+), Mg(2+) and Zn(2+), and inhibited by EDTA, PMSF and DTT. In terms of biological role, thrombin-like enzyme that shows fibrinogenolytic activity against bovine fibrinogen alpha and beta chains, but not gamma chain. Hydrolyzes fibrin. Enhances ADP-induced human platelet aggregation. Has arginine esterase activity for TAMe (tosyl-arginine methyl ester) substrate. Reduces thrombin-induced thrombosis. Does not have hemorrhagic activity. Reduces the motility of human liver cancer HepG2 cells in a wound-healing assay. This chain is Thrombin-like enzyme agkihpin-2, found in Gloydius halys (Chinese water mocassin).